A 30-amino-acid chain; its full sequence is Trypsin inhibitor 4 (30 aa).

Intrachain disulfides connect C3-C20, C10-C22, and C16-C29.

Belongs to the protease inhibitor I7 (squash-type serine protease inhibitor) family.

It is found in the secreted. Functionally, inhibits trypsin. This Cucumis sativus (Cucumber) protein is Trypsin inhibitor 4.